The sequence spans 308 residues: ADP-L-glycero-D-manno-heptose-6-epimerase (308 aa).

Residues 10–11 (FI), 31–32 (DN), Lys-38, Lys-53, 75–79 (EGACS), and Asn-92 each bind NADP(+). Tyr-139 serves as the catalytic Proton acceptor. NADP(+) is bound at residue Lys-143. Substrate is bound at residue Asn-168. The NADP(+) site is built by Val-169 and Lys-177. Lys-177 acts as the Proton acceptor in catalysis. Substrate-binding positions include Ser-179, His-186, 200–203 (FAGS), Arg-208, and Tyr-271.

This sequence belongs to the NAD(P)-dependent epimerase/dehydratase family. HldD subfamily. As to quaternary structure, homopentamer. NADP(+) serves as cofactor.

The enzyme catalyses ADP-D-glycero-beta-D-manno-heptose = ADP-L-glycero-beta-D-manno-heptose. Its pathway is nucleotide-sugar biosynthesis; ADP-L-glycero-beta-D-manno-heptose biosynthesis; ADP-L-glycero-beta-D-manno-heptose from D-glycero-beta-D-manno-heptose 7-phosphate: step 4/4. Its function is as follows. Catalyzes the interconversion between ADP-D-glycero-beta-D-manno-heptose and ADP-L-glycero-beta-D-manno-heptose via an epimerization at carbon 6 of the heptose. The protein is ADP-L-glycero-D-manno-heptose-6-epimerase of Haemophilus influenzae (strain 86-028NP).